The chain runs to 251 residues: Triosephosphate isomerase (251 aa).

9–11 (NWK) serves as a coordination point for substrate. His-95 acts as the Electrophile in catalysis. Glu-167 (proton acceptor) is an active-site residue. Residues Gly-173, Ser-213, and 234 to 235 (GG) each bind substrate. Ser-213 is modified (phosphoserine).

It belongs to the triosephosphate isomerase family. As to quaternary structure, homodimer.

The protein localises to the cytoplasm. The catalysed reaction is D-glyceraldehyde 3-phosphate = dihydroxyacetone phosphate. Its pathway is carbohydrate biosynthesis; gluconeogenesis. It participates in carbohydrate degradation; glycolysis; D-glyceraldehyde 3-phosphate from glycerone phosphate: step 1/1. Its function is as follows. Involved in the gluconeogenesis. Catalyzes stereospecifically the conversion of dihydroxyacetone phosphate (DHAP) to D-glyceraldehyde-3-phosphate (G3P). The chain is Triosephosphate isomerase from Bacillus cereus (strain ATCC 10987 / NRS 248).